The following is a 551-amino-acid chain: DNA mismatch repair protein MutL (551 aa).

Belongs to the DNA mismatch repair MutL/HexB family.

Its function is as follows. This protein is involved in the repair of mismatches in DNA. It is required for dam-dependent methyl-directed DNA mismatch repair. May act as a 'molecular matchmaker', a protein that promotes the formation of a stable complex between two or more DNA-binding proteins in an ATP-dependent manner without itself being part of a final effector complex. The protein is DNA mismatch repair protein MutL of Thermosipho melanesiensis (strain DSM 12029 / CIP 104789 / BI429).